The following is a 290-amino-acid chain: 4-hydroxybenzoate octaprenyltransferase (290 aa).

The next 6 membrane-spanning stretches (helical) occupy residues 41 to 61, 89 to 109, 133 to 153, 158 to 178, 202 to 224, and 269 to 289; these read WPLVAIFALGTLLMRSAGCAM, WEAVAIAAVLSFVAFLLILPL, FFAIPQAYLGIAFGFGIPMAF, GTVPALAWVMLVANVFWSVAY, FGRFDVAAIMLCYAVTLGIYAWI, and WLGGVLFAGIAAHYLVAGAAG.

Belongs to the UbiA prenyltransferase family. Requires Mg(2+) as cofactor.

It localises to the cell inner membrane. The catalysed reaction is all-trans-octaprenyl diphosphate + 4-hydroxybenzoate = 4-hydroxy-3-(all-trans-octaprenyl)benzoate + diphosphate. Its pathway is cofactor biosynthesis; ubiquinone biosynthesis. Its function is as follows. Catalyzes the prenylation of para-hydroxybenzoate (PHB) with an all-trans polyprenyl group. Mediates the second step in the final reaction sequence of ubiquinone-8 (UQ-8) biosynthesis, which is the condensation of the polyisoprenoid side chain with PHB, generating the first membrane-bound Q intermediate 3-octaprenyl-4-hydroxybenzoate. This is 4-hydroxybenzoate octaprenyltransferase from Burkholderia vietnamiensis (strain G4 / LMG 22486) (Burkholderia cepacia (strain R1808)).